A 254-amino-acid polypeptide reads, in one-letter code: Urease accessory protein UreF (254 aa).

Basic and acidic residues predominate over residues 1-11 (MDKGKSVKSTE). Positions 1–25 (MDKGKSVKSTEKSVGIPPKTPKTDN) are disordered.

The protein belongs to the UreF family. UreH, UreF and UreG form a complex that acts as a GTP-hydrolysis-dependent molecular chaperone, activating the urease apoprotein by helping to assemble the nickel containing metallocenter of UreC. The UreE protein probably delivers the nickel.

The protein localises to the cytoplasm. Its function is as follows. Required for maturation of urease via the functional incorporation of the urease nickel metallocenter. The protein is Urease accessory protein UreF of Helicobacter pylori (strain P12).